The sequence spans 162 residues: MVFICLYFEVHGIYNKNEKLFDRIYCNSNGHILEVCRKLKTQDFWFSEFGDKPYYFFSNKVSTYCKIGGNDIGEFEYYLLDIFLYGPLKFKVNDIYDFNMIGALERRQRYSEMIEREKKNKNKFKIVFYFFQKKYKLLLENRFLVKERLTTKNNLIVYIWYW.

It belongs to the A.longa ORF167/ORF288 family.

Its subcellular location is the plastid. This is an uncharacterized protein from Euglena longa (Euglenophycean alga).